The chain runs to 140 residues: ATP synthase epsilon chain (140 aa).

The protein belongs to the ATPase epsilon chain family. As to quaternary structure, F-type ATPases have 2 components, CF(1) - the catalytic core - and CF(0) - the membrane proton channel. CF(1) has five subunits: alpha(3), beta(3), gamma(1), delta(1), epsilon(1). CF(0) has three main subunits: a, b and c.

The protein localises to the cell inner membrane. Functionally, produces ATP from ADP in the presence of a proton gradient across the membrane. The chain is ATP synthase epsilon chain from Xanthomonas oryzae pv. oryzae (strain PXO99A).